The chain runs to 213 residues: Achelase-1 (213 aa).

A Peptidase S1 domain is found at 1–213 (IVGGSVTTIG…RYTSWIQSNA (213 aa)). Cys26 and Cys42 are oxidised to a cystine. Catalysis depends on charge relay system residues His41 and Asp86. Cysteines 155 and 172 form a disulfide. Ser188 functions as the Charge relay system in the catalytic mechanism.

Belongs to the peptidase S1 family. As to expression, hemolymph and saliva of the larval form (caterpillar).

Its subcellular location is the secreted. The protein localises to the extracellular space. Its activity is regulated as follows. Sensitive to serine proteinase inhibitors and thiol proteinase inhibitors. In terms of biological role, fibrinolytic activity; shows preferential cleavage of Arg-Gly bonds in all three fibrinogen chains. Contact with the caterpillars causes severe bleeding, due the anticoagulant effect of the protein. This chain is Achelase-1, found in Lonomia achelous (Giant silkworm moth).